A 528-amino-acid polypeptide reads, in one-letter code: Phosphoenolpyruvate carboxykinase (ATP) (528 aa).

Substrate-binding residues include Arg-56, Tyr-192, and Lys-198. ATP contacts are provided by residues Lys-198, His-217, and 233 to 241; that span reads GLSGTGKTT. Mn(2+) is bound by residues Lys-198 and His-217. Mn(2+) is bound at residue Asp-254. ATP is bound by residues Glu-282, Arg-319, and Thr-444. Residue Arg-319 coordinates substrate.

The protein belongs to the phosphoenolpyruvate carboxykinase (ATP) family. The cofactor is Mn(2+).

Its subcellular location is the cytoplasm. It catalyses the reaction oxaloacetate + ATP = phosphoenolpyruvate + ADP + CO2. It participates in carbohydrate biosynthesis; gluconeogenesis. Its function is as follows. Involved in the gluconeogenesis. Catalyzes the conversion of oxaloacetate (OAA) to phosphoenolpyruvate (PEP) through direct phosphoryl transfer between the nucleoside triphosphate and OAA. The polypeptide is Phosphoenolpyruvate carboxykinase (ATP) (Bacillus pumilus (strain SAFR-032)).